Reading from the N-terminus, the 1807-residue chain is MFGQNNSSGFGGGTGAFGQNNQQTGGLFGSNSNTPGNTLFGSQNTSTTGFGQNTTQPLFGSNTNGGLFGNRNNTTTTGGTGFGMSSGTGMFGQSNTPAFGGTNNATNPSGGGLFGSNTANNNANTGTSFSFGSNAGSTGFGNTASNTGTGGGLFGSQNNAGNTAGNTGFGSQGTGGGLFGSSTTPATTNAFGTSGFVSSNANAVNGTANPPYAVTSEKDPQTNGTSVFQSITCMPAYRSYSFEELRLQDYNQGRRFGNASSTNTTSAFGSTPAFGASTTPFGQNLSGTTNNATPFGTSNATNTTPGSGLFGGGSAFGSNTTNTGFGSGTNNASGGLFGQNNNTTSTPSTGLFGGSTFNQQKPAFSGFGSTTNTTNTGTGTGLFGSNNATNTGTGQTTGGLFGGAATGTGTGFGSSTGGFGSNTNNQPNSGTMGTGLFGFGANNNTANNNTAPTSTFGGNNSSNFSFGANNNAATKPSGFGFGSTTTTPASGGFSFGQNANNAPKPAFGSTATTAPKPAGTGLFGGLGAGANTNTATNATGTGGSLFGNANTAGSNMFGSANSSTPGTGLFGSTQTNNATSNTGTGLFGSNNANTTNTGGSLFNKPSTTTGGLFGNTTAQQPSTTTSGLFGASNTNNQAQTSNFGTGLFGGSQAGQQQQPLQASIDQNPYGNNPLFSSTTSQVAPTSIQEPIASPLTSKPTPKKAASLPQFWLSPRSHNTARLASISSFAKSAVMNSTSASGKPKSLHLFDSLNDDVLLSADAFTPRQNIKKLVITHKISKDDILQNGVKNGNDAKSDSKVQEKAPQNEADGSLKKDEHVVLSDDYWMKPSIEELSKYPKEKLCSVHQFSVGRTGYGQVAFLKPVDLSGFEKLEDIPGKVVVFERKICAVYPVEGSSPPLGEGLNVPAIITLEKTWPLSRETREPIKDPQNPRYIQHVKRLHRIKDTEFIDFNDGKWIFKVQHFSRYGLLDDEEEENDMSSTSNEAGNLKKYDQPNLKVSGKNDSFVTHHTPGAFPNDSKNKELNRHFLKVDDSAPLDDTFMSKKVKLDFSSDSNVSERGDYDDNAKKVDEVISIEKVDGYSKENNVPLSEDDLSNSSESSNESVYSLVEESDASLAADNMDIEDISEESDREELSSMRFGAQDFHGLVVTDNWRDQLNLSVQRSALIKAAFPESQSNANLKNSRGIYYNEHDLVTDIFGNQNLDTDRPWQSLDKPGAFIPSKFHFTANGSCIYVLKSSDVKIRSIYDFIPTKDPNGTKLLEYQLDQTEVYLDLSGTHAASPRSSMTVKPLSLCSSGYESIVWDLTSILFDPKNYSLPSELSSEAREVLYQKLVRESLSEWITKTLEHETTTLAKEAETSEERIYILLTGNLIGQACEEAVQSQNNRLSTLIPLVNSDVDIQQEVKQQLEEWRKHGDLPFINKFTRLIFELLSGNTDIAEGCGTKGDEDYVQSIPITKNMTWLRAFGLKLWYNTDISIGEAMQLYVESLQKFPEIMQKPIATSAVQGIEVYDIIYLLLKAYAMGTSLEELTIPESAKCSPLNYRVVWQLAIYLSKARSLCDFSDRVVDINMAEDLKPISVHSDQLTLAYASQLEASGQWLWSLFVLLHLENVETRTSTITSCLARNLRGGLGAGAVEMIEKLCIPESWLNEAKALYARYVGDHLNELYFLQEAALYEDAHKVLLDTLAPQAVISGNKTQLKKALEGFNGQTDGLASWRFGGQIYSDYLDLLEGNFDANQELKLFTLRKISVALKELNATNLLQKAALHKISRFVNALCNEESLTDAICNLPLPLADSLANLQNISVQF.

A disordered region spans residues 1 to 118 (MFGQNNSSGF…SGGGLFGSNT (118 aa)). GLFG repeat units follow at residues 26–29 (GLFG) and 66–69 (GLFG). Residues 29 to 61 (GSNSNTPGNTLFGSQNTSTTGFGQNTTQPLFGS) are compositionally biased toward polar residues. The span at 62–77 (NTNGGLFGNRNNTTTT) shows a compositional bias: low complexity. Gly residues predominate over residues 78–90 (GGTGFGMSSGTGM). The segment covering 93–108 (QSNTPAFGGTNNATNP) has biased composition (polar residues). 10 GLFG repeats span residues 112 to 115 (GLFG), 152 to 155 (GLFG), 177 to 180 (GLFG), 308 to 311 (GLFG), 335 to 338 (GLFG), 350 to 353 (GLFG), 381 to 384 (GLFG), 399 to 402 (GLFG), 435 to 438 (GLFG), and 521 to 524 (GLFG). Positions 565–584 (PGTGLFGSTQTNNATSNTGT) are enriched in polar residues. The interval 565–685 (PGTGLFGSTQ…SSTTSQVAPT (121 aa)) is disordered. GLFG repeat units lie at residues 585–588 (GLFG), 611–614 (GLFG), 627–630 (GLFG), and 646–649 (GLFG). The span at 588–600 (GSNNANTTNTGGS) shows a compositional bias: low complexity. Residues 603–644 (NKPSTTTGGLFGNTTAQQPSTTTSGLFGASNTNNQAQTSNFG) are compositionally biased toward polar residues. Over residues 653–663 (AGQQQQPLQAS) the composition is skewed to low complexity. The span at 664–685 (IDQNPYGNNPLFSSTTSQVAPT) shows a compositional bias: polar residues. A Phosphoserine modification is found at S724. The segment at 785–814 (QNGVKNGNDAKSDSKVQEKAPQNEADGSLK) is disordered. Residues 792-802 (NDAKSDSKVQE) show a composition bias toward basic and acidic residues. The 142-residue stretch at 822–963 (SDDYWMKPSI…GKWIFKVQHF (142 aa)) folds into the Peptidase S59 domain. Residues 974-1020 (EENDMSSTSNEAGNLKKYDQPNLKVSGKNDSFVTHHTPGAFPNDSKN) are disordered. S1051 is subject to Phosphoserine. Residues 1082–1104 (KENNVPLSEDDLSNSSESSNESV) are disordered. The span at 1094–1104 (SNSSESSNESV) shows a compositional bias: low complexity.

Belongs to the nucleoporin GLFG family. As to quaternary structure, interacts (via G-L-F-G repeats) with rpn15/dss1. Interacts with raf1. Interacts with ned1. In terms of processing, nup189 is autocatalytically cleaved in nup98 and nup96.

It localises to the nucleus. Its subcellular location is the nuclear pore complex. Functionally, functions as a component of the nuclear pore complex (NPC). NPC components, collectively referred to as nucleoporins (NUPs), can play the role of both NPC structural components and of docking or interaction partners for transiently associated nuclear transport factors. Active directional transport is assured by both, a Phe-Gly (FG) repeat affinity gradient for these transport factors across the NPC and a transport cofactor concentration gradient across the nuclear envelope. Nup189 is autocatalytically cleaved in vivo in 2 polypeptides which assume different functions in the NPC. Nup98 as one of the FG repeat nucleoporins participates in karyopherin interactions and contains part of the autocatalytic cleavage activity. Nup96 as part of the NUP84 complex is involved in nuclear poly(A)+ RNA and tRNA export. This Schizosaccharomyces pombe (strain 972 / ATCC 24843) (Fission yeast) protein is Nucleoporin nup189 (nup189).